Consider the following 75-residue polypeptide: DNA-directed RNA polymerase subunit epsilon (75 aa).

This sequence belongs to the RNA polymerase subunit epsilon family. In terms of assembly, RNAP is composed of a core of 2 alpha, a beta and a beta' subunit. The core is associated with a delta subunit, and at least one of epsilon or omega. When a sigma factor is associated with the core the holoenzyme is formed, which can initiate transcription.

It catalyses the reaction RNA(n) + a ribonucleoside 5'-triphosphate = RNA(n+1) + diphosphate. Functionally, a non-essential component of RNA polymerase (RNAP). This is DNA-directed RNA polymerase subunit epsilon from Lactobacillus johnsonii (strain CNCM I-12250 / La1 / NCC 533).